Consider the following 203-residue polypeptide: Proteasome subunit beta 2 (203 aa).

A propeptide spans 1–10 (MNLQNKILKG) (removed in mature form; by autocatalysis). Thr11 functions as the Nucleophile in the catalytic mechanism.

Belongs to the peptidase T1B family. As to quaternary structure, the 20S proteasome core is composed of 14 alpha and 14 beta subunits that assemble into four stacked heptameric rings, resulting in a barrel-shaped structure. The two inner rings, each composed of seven catalytic beta subunits, are sandwiched by two outer rings, each composed of seven alpha subunits. The catalytic chamber with the active sites is on the inside of the barrel. Has a gated structure, the ends of the cylinder being occluded by the N-termini of the alpha-subunits. Is capped at one or both ends by the proteasome regulatory ATPase, PAN.

The protein localises to the cytoplasm. It catalyses the reaction Cleavage of peptide bonds with very broad specificity.. The formation of the proteasomal ATPase PAN-20S proteasome complex, via the docking of the C-termini of PAN into the intersubunit pockets in the alpha-rings, triggers opening of the gate for substrate entry. Interconversion between the open-gate and close-gate conformations leads to a dynamic regulation of the 20S proteasome proteolysis activity. Its function is as follows. Component of the proteasome core, a large protease complex with broad specificity involved in protein degradation. This Sulfolobus acidocaldarius (strain ATCC 33909 / DSM 639 / JCM 8929 / NBRC 15157 / NCIMB 11770) protein is Proteasome subunit beta 2.